We begin with the raw amino-acid sequence, 370 residues long: Peptide chain release factor 1 (370 aa).

Position 231 is an N5-methylglutamine (Gln231). A compositionally biased stretch (basic and acidic residues) spans 284-293; sequence AREERERETR. Residues 284–303 are disordered; sequence AREERERETRAAQVGTGERS.

This sequence belongs to the prokaryotic/mitochondrial release factor family. Post-translationally, methylated by PrmC. Methylation increases the termination efficiency of RF1.

It is found in the cytoplasm. Functionally, peptide chain release factor 1 directs the termination of translation in response to the peptide chain termination codons UAG and UAA. This chain is Peptide chain release factor 1, found in Deinococcus geothermalis (strain DSM 11300 / CIP 105573 / AG-3a).